The primary structure comprises 329 residues: MPTIDEIAKLCNVSKTTVSRVLNNHPYVSKEKRDMILKAINELDYTPNYLARNFRRNKTQTIALSVPSIDHPFFAQLIKGVSHEVLFKNYKVIVFQTFYDKQTELELLELLKHKEVDGIILGTLENEWDQISPFLKYGPILLCNEYHHSADITIIGYDEFEAAYMGVVHLIERGHKKIGFCFDTPYSEAQCQRKEGYLKALQDYNLHHRSEWIFGEMFNIEDGFRVFHKIKDLKDRPSAIFTGNDQVAAGIIKQAMKNGFKVPEDLAVIGFDNQLICQVVTPTITTIDIPVIELGQQAVLKIIESISGNASLNRRIIKLPTKLIIREST.

The 55-residue stretch at 2-56 (PTIDEIAKLCNVSKTTVSRVLNNHPYVSKEKRDMILKAINELDYTPNYLARNFRR) folds into the HTH lacI-type domain. The H-T-H motif DNA-binding region spans 4 to 23 (IDEIAKLCNVSKTTVSRVLN).

Its function is as follows. Positively regulates the ntdABC operon and negatively regulates its own transcription. Binds to NTD to induce ntdABC transcription. This Bacillus subtilis (strain 168) protein is NTD biosynthesis operon regulator NtdR (ntdR).